Consider the following 254-residue polypeptide: UPF0246 protein FTN_1542 (254 aa).

It belongs to the UPF0246 family.

The protein is UPF0246 protein FTN_1542 of Francisella tularensis subsp. novicida (strain U112).